A 309-amino-acid chain; its full sequence is Partitioning defective protein 6 (309 aa).

Residues 14–96 (TLQVKSKFDS…PLLRLLIQRR (83 aa)) enclose the PB1 domain. Residues 132-149 (ISNPEDFRQVSAIIDVDI) enclose the Pseudo-CRIB domain. The region spanning 156 to 249 (RVRLCKHGQE…NLIITVKPAN (94 aa)) is the PDZ domain. Residues 249-270 (NQRNTLSRGPSQQGTPNASEMS) are compositionally biased toward polar residues. Positions 249–309 (NQRNTLSRGP…DANDSDSGED (61 aa)) are disordered.

This sequence belongs to the PAR6 family. As to quaternary structure, interacts with par-3, required for its peripheral localization, and with cdc-42, required for the activation of a par-3/par-6/pkc-3 complex. As to expression, colocalized with par-3 at all stages in early embryos, at the anterior cortex of the embryo. Patchy expression observed at the periphery after completion of meiosis I and in meiosis II, which on completion of metaphase II, is restricted to the anterior 85% of embryo length; this decreases to 55% in embryos between prophase and telophase of the first mitosis. During the first cleavage, expression is detected in the advancing furrow. Along with pkc-3, is unable to associate with the apical cortex of cells that lack par-3. Transiently coexpressed and colocalized with par-3 and pkc-3, asymmetrically in the developing somatic gonad, including the spermathecal precursor cells of L4 larvae.

The protein resides in the cytoplasm. It is found in the cell membrane. It localises to the cell junction. The protein localises to the tight junction. Functionally, necessary for apicobasal and anterior-posterior asymmetries associated with cell adhesion and gastrulation during the first few cell cycles of embryogenesis. Required for localizing/ maintaining par-3 at the cell periphery. Regulates mes-1 expression and/or localization pattern during early embryogenesis. Acts together with par-3 and pkc-3 in maintaining epithelial cell polarity in the distal spermatheca. Plays a role in endosome and Golgi body positioning. The protein is Partitioning defective protein 6 of Caenorhabditis elegans.